Reading from the N-terminus, the 89-residue chain is Small ribosomal subunit protein uS15 (89 aa).

Belongs to the universal ribosomal protein uS15 family. As to quaternary structure, part of the 30S ribosomal subunit. Forms a bridge to the 50S subunit in the 70S ribosome, contacting the 23S rRNA.

One of the primary rRNA binding proteins, it binds directly to 16S rRNA where it helps nucleate assembly of the platform of the 30S subunit by binding and bridging several RNA helices of the 16S rRNA. Functionally, forms an intersubunit bridge (bridge B4) with the 23S rRNA of the 50S subunit in the ribosome. This Acholeplasma laidlawii (strain PG-8A) protein is Small ribosomal subunit protein uS15.